We begin with the raw amino-acid sequence, 420 residues long: Putative sporulation-specific glycosylase YdhD (420 aa).

LysM domains follow at residues 2 to 45 (FIHI…ALLI) and 48 to 92 (YVYT…KITI). Positions 100–420 (AGTLSFYVLR…LRKFFTIRKV (321 aa)) constitute a GH18 domain. Residue glutamate 212 is the Proton donor of the active site.

The protein belongs to the glycosyl hydrolase 18 family. Chitinase class II subfamily.

Its subcellular location is the spore wall. In Bacillus subtilis (strain 168), this protein is Putative sporulation-specific glycosylase YdhD (ydhD).